The following is a 622-amino-acid chain: Mitochondrial distribution and morphology protein 32 (622 aa).

The N-terminal 70 residues, 1-70, are a transit peptide targeting the mitochondrion; the sequence is MLITRLRVPT…RTFPSNDKFT (70 aa). Over 71-123 the chain is Mitochondrial matrix; the sequence is TKASNIETILLRKNNEREFKQSLLADAKNFQERFKINLKWILIKNNRPFSLNE. The helical transmembrane segment at 124–144 threads the bilayer; the sequence is ISIIASWLILSQILWLILSTT. Over 145–601 the chain is Mitochondrial intermembrane; it reads TFISFYLFVI…DWEFKNKNDW (457 aa). The chain crosses the membrane as a helical span at residues 602–622; that stretch reads MKQWGTTFASQLLLFGFGAMV.

This sequence belongs to the MDM31/MDM32 family. Interacts with MDM31. Participates in a complex of about 175 kDa.

It is found in the mitochondrion inner membrane. Functionally, involved in the organization of the mitochondrial membranes and the global structure of the mitochondria. Also required for mitochondrial distribution and mobility as well as for the maintenance of mitochondrial DNA nucleoids structures. This Saccharomyces cerevisiae (strain ATCC 204508 / S288c) (Baker's yeast) protein is Mitochondrial distribution and morphology protein 32 (MDM32).